Consider the following 777-residue polypeptide: Proton-coupled zinc antiporter SLC30A5 (777 aa).

Residues 1–28 are Cytoplasmic-facing; it reads MEEKYSSNVMSSGRLGPVDAPESRLTRY. Residues 29-49 traverse the membrane as a helical segment; the sequence is IVLLCFTKFLKALGIFESYDL. The Lumenal segment spans residues 50-52; the sequence is LKV. The helical transmembrane segment at 53-73 threads the bilayer; the sequence is VHIVQFIFILKLGSTCFMVLF. Residues 74–94 are Cytoplasmic-facing; sequence QKPFSSGKSITKRQWVSIVKH. Residues 95-115 form a helical membrane-spanning segment; sequence AFVSCIISLLWFFGLTLCGPL. Residues 116 to 117 lie on the Lumenal side of the membrane; it reads RT. The helical transmembrane segment at 118–138 threads the bilayer; the sequence is LLLFEHSDIVVISLLTVLFTG. The Cytoplasmic portion of the chain corresponds to 139–148; it reads SGGGPSKTRG. Residues 149–169 form a helical membrane-spanning segment; sequence AAFFIIAVICLLLFDNDDLMA. Topologically, residues 170 to 189 are lumenal; that stretch reads KIAEHPEGHHDSALTHFLYR. A helical membrane pass occupies residues 190–210; the sequence is AFFLLGVADHKGGVLLLVLAL. The Cytoplasmic portion of the chain corresponds to 211 to 234; sequence CFNVGFHTASRKLSLDIGGAKRLQ. The helical transmembrane segment at 235–255 threads the bilayer; it reads ALSHLVSVIILSPWVIILSAT. The Lumenal segment spans residues 256–263; that stretch reads TESKIESW. A helical transmembrane segment spans residues 264-284; sequence SALIMPFMTVIFSVMIMDFYV. Residues 285-299 lie on the Cytoplasmic side of the membrane; it reads ESVCSVKMEPSKCAR. The chain crosses the membrane as a helical span at residues 300–320; that stretch reads YGSFLIFASALLLGNFWTHPI. Over 321–338 the chain is Lumenal; sequence TDQLRAMNKPAHQLHTEH. A helical membrane pass occupies residues 339-359; sequence VLSGGVVVSAIFFILSAQILA. Over 360 to 414 the chain is Cytoplasmic; it reads SSSRKGQRGTLVGYSPEGTPLYNFMGDALHNTSPSMPRFLKDSLKQILEEYDSRQ. A helical membrane pass occupies residues 415–435; that stretch reads IFYFLCLNLAFTFVEIFYGVW. The Lumenal portion of the chain corresponds to 436–444; it reads TNSLGLLSD. A helical membrane pass occupies residues 445–465; it reads GFHMLFDCSALVMGLIAALMT. Positions 447 and 451 each coordinate Zn(2+). At 466 to 484 the chain is on the cytoplasmic side; that stretch reads RWKATRIFSYGYGRVEILS. The helical transmembrane segment at 485–505 threads the bilayer; that stretch reads GFINGLFLVVIAFFVFIEAVA. At 506-516 the chain is on the lumenal side; sequence RIYDPPDINTD. Residues 517-537 form a helical membrane-spanning segment; that stretch reads MLTPVSVGGLIVNLVGICAFS. Residues 538–586 form a his-rich loop; required for zinc transport region; sequence HAHSHGAARGGCPSHDHGHSHHGHGHSHGHNHGHSHSDHGHNHGHTHNH. Over 538–604 the chain is Cytoplasmic; that stretch reads HAHSHGAARG…VGMNANMRGV (67 aa). The interval 547-593 is disordered; that stretch reads GGCPSHDHGHSHHGHGHSHGHNHGHSHSDHGHNHGHTHNHGHSHGSA. Composition is skewed to basic residues over residues 555–571 and 579–589; these read GHSH…NHGH and NHGHTHNHGHS. Residues 605–625 form a helical membrane-spanning segment; sequence FSHVLADTLGSVGVIVSTILI. Zn(2+) is bound by residues histidine 607 and aspartate 611. The Lumenal segment spans residues 626–629; it reads RQFG. A helical transmembrane segment spans residues 630-650; sequence WLIADPLCSLFIAVLIFGSVL. Topologically, residues 651 to 777 are cytoplasmic; sequence PLLKDACQVI…KYYKDGTYIM (127 aa).

This sequence belongs to the cation diffusion facilitator (CDF) transporter (TC 2.A.4) family. SLC30A subfamily. Heterodimer with SLC30A6/ZNT6; form a functional zinc ion transmembrane transporter.

It is found in the golgi apparatus. It localises to the golgi stack membrane. The protein resides in the cytoplasmic vesicle. Its subcellular location is the COPII-coated vesicle membrane. The protein localises to the secretory vesicle membrane. It is found in the trans-Golgi network membrane. It carries out the reaction Zn(2+)(in) + 2 H(+)(out) = Zn(2+)(out) + 2 H(+)(in). Together with SLC30A6 forms a functional proton-coupled zinc ion antiporter mediating zinc entry into the lumen of organelles along the secretory pathway. By contributing to zinc ion homeostasis within the early secretory pathway, regulates the activation and folding of enzymes like alkaline phosphatases and enzymes involved in phosphatidylinositol glycan anchor biosynthesis. This is Proton-coupled zinc antiporter SLC30A5 (slc30a5) from Xenopus tropicalis (Western clawed frog).